A 111-amino-acid chain; its full sequence is uncharacterized protein (111 aa).

3 helical membrane-spanning segments follow: residues Ala-22–Thr-42, Leu-48–Leu-68, and Val-75–Leu-95.

The protein localises to the membrane. This is an uncharacterized protein from Saccharomyces cerevisiae (strain ATCC 204508 / S288c) (Baker's yeast).